We begin with the raw amino-acid sequence, 79 residues long: Large ribosomal subunit protein uL24 (79 aa).

It belongs to the universal ribosomal protein uL24 family. As to quaternary structure, part of the 50S ribosomal subunit.

Its function is as follows. One of two assembly initiator proteins, it binds directly to the 5'-end of the 23S rRNA, where it nucleates assembly of the 50S subunit. In terms of biological role, one of the proteins that surrounds the polypeptide exit tunnel on the outside of the subunit. In Lactobacillus johnsonii (strain CNCM I-12250 / La1 / NCC 533), this protein is Large ribosomal subunit protein uL24.